A 410-amino-acid polypeptide reads, in one-letter code: LL-diaminopimelate aminotransferase (410 aa).

2 residues coordinate substrate: tyrosine 15 and glycine 42. Pyridoxal 5'-phosphate is bound by residues tyrosine 72, 108–109, tyrosine 132, asparagine 187, tyrosine 218, and 246–248; these read SK and SFS. Residues lysine 109, tyrosine 132, and asparagine 187 each coordinate substrate. Lysine 249 bears the N6-(pyridoxal phosphate)lysine mark. Pyridoxal 5'-phosphate contacts are provided by arginine 257 and asparagine 292. Asparagine 292 and arginine 388 together coordinate substrate.

This sequence belongs to the class-I pyridoxal-phosphate-dependent aminotransferase family. LL-diaminopimelate aminotransferase subfamily. Homodimer. The cofactor is pyridoxal 5'-phosphate.

It carries out the reaction (2S,6S)-2,6-diaminopimelate + 2-oxoglutarate = (S)-2,3,4,5-tetrahydrodipicolinate + L-glutamate + H2O + H(+). Its pathway is amino-acid biosynthesis; L-lysine biosynthesis via DAP pathway; LL-2,6-diaminopimelate from (S)-tetrahydrodipicolinate (aminotransferase route): step 1/1. Functionally, involved in the synthesis of meso-diaminopimelate (m-DAP or DL-DAP), required for both lysine and peptidoglycan biosynthesis. Catalyzes the direct conversion of tetrahydrodipicolinate to LL-diaminopimelate. In Geobacter metallireducens (strain ATCC 53774 / DSM 7210 / GS-15), this protein is LL-diaminopimelate aminotransferase.